Reading from the N-terminus, the 182-residue chain is Glycerol-3-phosphate acyltransferase 1 (182 aa).

The next 5 membrane-spanning stretches (helical) occupy residues Met5–Val25, Gly54–Ala74, Ser81–Phe101, Ile117–Ile137, and Ile157–Leu177.

The protein belongs to the PlsY family. As to quaternary structure, probably interacts with PlsX.

It localises to the cell membrane. The enzyme catalyses an acyl phosphate + sn-glycerol 3-phosphate = a 1-acyl-sn-glycero-3-phosphate + phosphate. Its pathway is lipid metabolism; phospholipid metabolism. Its function is as follows. Catalyzes the transfer of an acyl group from acyl-phosphate (acyl-PO(4)) to glycerol-3-phosphate (G3P) to form lysophosphatidic acid (LPA). This enzyme utilizes acyl-phosphate as fatty acyl donor, but not acyl-CoA or acyl-ACP. The polypeptide is Glycerol-3-phosphate acyltransferase 1 (Bacillus thuringiensis subsp. konkukian (strain 97-27)).